Consider the following 90-residue polypeptide: N(2)-fixation sustaining protein CowN (90 aa).

Belongs to the CowN family.

In terms of biological role, is required to sustain N(2)-dependent growth in the presence of low levels of carbon monoxide (CO). Probably acts by protecting the N(2) fixation ability of the nitrogenase complex, which is inactivated in the presence of CO. In Halorhodospira halophila (strain DSM 244 / SL1) (Ectothiorhodospira halophila (strain DSM 244 / SL1)), this protein is N(2)-fixation sustaining protein CowN.